The sequence spans 115 residues: MRLNHKQGEAGEDAALAFLQSQGCTLLARNWHCAYGEIDLIVKNGGMILFVEVKYRKNRQFGGAAYSISPSKLLKLQRSVEYYLQQNRLTNVPCRLDAVLIEGSRPPEWIQNITG.

Belongs to the UPF0102 family.

This Neisseria meningitidis serogroup A / serotype 4A (strain DSM 15465 / Z2491) protein is UPF0102 protein NMA0341.